A 124-amino-acid polypeptide reads, in one-letter code: Large ribosomal subunit protein bL12 (124 aa).

This sequence belongs to the bacterial ribosomal protein bL12 family. Homodimer. Part of the ribosomal stalk of the 50S ribosomal subunit. Forms a multimeric L10(L12)X complex, where L10 forms an elongated spine to which 2 to 4 L12 dimers bind in a sequential fashion. Binds GTP-bound translation factors.

Its function is as follows. Forms part of the ribosomal stalk which helps the ribosome interact with GTP-bound translation factors. Is thus essential for accurate translation. The sequence is that of Large ribosomal subunit protein bL12 from Ralstonia nicotianae (strain ATCC BAA-1114 / GMI1000) (Ralstonia solanacearum).